The following is a 241-amino-acid chain: MDLLIYGVNGHMGSLIKNLAEKDSYWRVIGGVDSEMSDDPMNNRYDVVVDFSHPSALQDVLQLCKEKKIPLVIGTTGFSKEQLEDIKFASAKIPILQSTNMSLGMNLLFRLVEQTAAVLKDKSDIEVIESHHNRKKDAPSGSARTIVESIEKGLGEEKKHQHGRVGECPREKGEIGIHAIRGGNIVGYHEANFINDLETIKIVHEAHNRSVFAQGALDAAKFIMDQEPGLYTMKDLLNLMV.

NAD(+) is bound by residues 7–12, 74–76, and 98–101; these read GVNGHM, GTT, and STNM. Histidine 131 (proton donor/acceptor) is an active-site residue. (S)-2,3,4,5-tetrahydrodipicolinate is bound at residue histidine 132. Lysine 135 acts as the Proton donor in catalysis. 141–142 lines the (S)-2,3,4,5-tetrahydrodipicolinate pocket; that stretch reads GS.

This sequence belongs to the DapB family.

The protein resides in the cytoplasm. It carries out the reaction (S)-2,3,4,5-tetrahydrodipicolinate + NAD(+) + H2O = (2S,4S)-4-hydroxy-2,3,4,5-tetrahydrodipicolinate + NADH + H(+). The catalysed reaction is (S)-2,3,4,5-tetrahydrodipicolinate + NADP(+) + H2O = (2S,4S)-4-hydroxy-2,3,4,5-tetrahydrodipicolinate + NADPH + H(+). The protein operates within amino-acid biosynthesis; L-lysine biosynthesis via DAP pathway; (S)-tetrahydrodipicolinate from L-aspartate: step 4/4. In terms of biological role, catalyzes the conversion of 4-hydroxy-tetrahydrodipicolinate (HTPA) to tetrahydrodipicolinate. This Alkaliphilus oremlandii (strain OhILAs) (Clostridium oremlandii (strain OhILAs)) protein is 4-hydroxy-tetrahydrodipicolinate reductase.